The primary structure comprises 1549 residues: Ferredoxin-dependent glutamate synthase (1549 aa).

C37 acts as the For GATase activity in catalysis. Positions 37–435 constitute a Glutamine amidotransferase type-2 domain; that stretch reads CGVGFIAHLD…PGEMIVLDLQ (399 aa). FMN is bound at residue 1116–1173; that stretch reads LHEVHCLLVENNLREKVILRVDGGLRTGQDVVMAALLGADEYGFGTIAMIAGGCIMAR. C1169, C1175, and C1180 together coordinate [3Fe-4S] cluster.

It belongs to the glutamate synthase family. Monomer. [3Fe-4S] cluster is required as a cofactor. The cofactor is FAD. FMN serves as cofactor.

The protein resides in the plastid. It is found in the chloroplast stroma. It carries out the reaction 2 oxidized [2Fe-2S]-[ferredoxin] + 2 L-glutamate = L-glutamine + 2 reduced [2Fe-2S]-[ferredoxin] + 2-oxoglutarate + 2 H(+). The protein operates within amino-acid biosynthesis; L-glutamate biosynthesis via GLT pathway; L-glutamate from 2-oxoglutarate and L-glutamine (ferredoxin route): step 1/1. Its pathway is energy metabolism; nitrogen metabolism. In Cyanidium caldarium (Red alga), this protein is Ferredoxin-dependent glutamate synthase (gltB).